The sequence spans 335 residues: Ferrochelatase (335 aa).

2 residues coordinate Fe cation: His207 and Glu288.

The protein belongs to the ferrochelatase family.

It is found in the cytoplasm. It carries out the reaction heme b + 2 H(+) = protoporphyrin IX + Fe(2+). Its pathway is porphyrin-containing compound metabolism; protoheme biosynthesis; protoheme from protoporphyrin-IX: step 1/1. Catalyzes the ferrous insertion into protoporphyrin IX. This chain is Ferrochelatase, found in Helicobacter pylori (strain J99 / ATCC 700824) (Campylobacter pylori J99).